The chain runs to 39 residues: Basic phospholipase A2 (39 aa).

Ca(2+) contacts are provided by Tyr27, Gly29, and Gly31.

It belongs to the phospholipase A2 family. Group II subfamily. D49 sub-subfamily. Ca(2+) is required as a cofactor. As to expression, expressed by the venom gland.

Its subcellular location is the secreted. It carries out the reaction a 1,2-diacyl-sn-glycero-3-phosphocholine + H2O = a 1-acyl-sn-glycero-3-phosphocholine + a fatty acid + H(+). Its activity is regulated as follows. Is selectively inhibited by the gamma-phospholipase A2 inhibitor (PLI) CgMIP-I (AC P0DQP7) but not by the alpha-PLI CgMIP-II (AC P0DQP8). In terms of biological role, snake venom phospholipase A2 (PLA2) that shows high myotoxic activities, induces mild edema, and shows cytolytic, and anti-coagulant activities, as well as intracerebral lethal effect. Does not induce lethality at a dose of 5 ug/g, when intravenously injected into mice. PLA2 catalyzes the calcium-dependent hydrolysis of the 2-acyl groups in 3-sn-phosphoglycerides. The sequence is that of Basic phospholipase A2 from Cerrophidion godmani (Porthidium godmani).